We begin with the raw amino-acid sequence, 66 residues long: uncharacterized protein (66 aa).

The next 2 membrane-spanning stretches (helical) occupy residues 6–26 (KIIM…HFVG) and 39–59 (VTFF…SILL).

It is found in the cell membrane. This is an uncharacterized protein from Bacillus subtilis (strain 168).